Consider the following 212-residue polypeptide: dITP/XTP pyrophosphatase (212 aa).

7–12 contacts substrate; sequence SRNKKK. The active-site Proton acceptor is the Asp72. Asp72 contributes to the Mg(2+) binding site. Substrate-binding positions include Ser73, 163 to 166, Lys187, and 192 to 193; these read FGYD and HR. Positions 164–194 are disordered; that stretch reads GYDPLFEPAEAPGQSSAELTPERKDELSHRG. Basic and acidic residues predominate over residues 183 to 192; it reads TPERKDELSH.

Belongs to the HAM1 NTPase family. As to quaternary structure, homodimer. The cofactor is Mg(2+).

It carries out the reaction XTP + H2O = XMP + diphosphate + H(+). It catalyses the reaction dITP + H2O = dIMP + diphosphate + H(+). The enzyme catalyses ITP + H2O = IMP + diphosphate + H(+). Its function is as follows. Pyrophosphatase that catalyzes the hydrolysis of nucleoside triphosphates to their monophosphate derivatives, with a high preference for the non-canonical purine nucleotides XTP (xanthosine triphosphate), dITP (deoxyinosine triphosphate) and ITP. Seems to function as a house-cleaning enzyme that removes non-canonical purine nucleotides from the nucleotide pool, thus preventing their incorporation into DNA/RNA and avoiding chromosomal lesions. This chain is dITP/XTP pyrophosphatase, found in Corynebacterium urealyticum (strain ATCC 43042 / DSM 7109).